The primary structure comprises 278 residues: Dermonecrotic toxin Ls4SicTox-alphaIII1ii (278 aa).

H5 is a catalytic residue. E25 and D27 together coordinate Mg(2+). Residue H40 is the Nucleophile of the active site. A disulfide bridge links C44 with C50. Residue D84 coordinates Mg(2+).

The protein belongs to the arthropod phospholipase D family. Class I subfamily. Mg(2+) serves as cofactor. In terms of tissue distribution, expressed by the venom gland.

The protein resides in the secreted. It carries out the reaction an N-(acyl)-sphingosylphosphocholine = an N-(acyl)-sphingosyl-1,3-cyclic phosphate + choline. The catalysed reaction is an N-(acyl)-sphingosylphosphoethanolamine = an N-(acyl)-sphingosyl-1,3-cyclic phosphate + ethanolamine. It catalyses the reaction a 1-acyl-sn-glycero-3-phosphocholine = a 1-acyl-sn-glycero-2,3-cyclic phosphate + choline. The enzyme catalyses a 1-acyl-sn-glycero-3-phosphoethanolamine = a 1-acyl-sn-glycero-2,3-cyclic phosphate + ethanolamine. Functionally, dermonecrotic toxins cleave the phosphodiester linkage between the phosphate and headgroup of certain phospholipids (sphingolipid and lysolipid substrates), forming an alcohol (often choline) and a cyclic phosphate. This toxin acts on sphingomyelin (SM). It may also act on ceramide phosphoethanolamine (CPE), lysophosphatidylcholine (LPC) and lysophosphatidylethanolamine (LPE), but not on lysophosphatidylserine (LPS), and lysophosphatidylglycerol (LPG). It acts by transphosphatidylation, releasing exclusively cyclic phosphate products as second products. Induces dermonecrosis, hemolysis, increased vascular permeability, edema, inflammatory response, and platelet aggregation. This is Dermonecrotic toxin Ls4SicTox-alphaIII1ii from Loxosceles sp. (strain 4 GJB-2008) (Recluse spider).